Here is a 384-residue protein sequence, read N- to C-terminus: Succinyl-diaminopimelate desuccinylase (384 aa).

Zn(2+) is bound at residue His-72. Asp-74 is an active-site residue. Asp-105 is a Zn(2+) binding site. Glu-139 functions as the Proton acceptor in the catalytic mechanism. Positions 140, 168, and 355 each coordinate Zn(2+).

The protein belongs to the peptidase M20A family. DapE subfamily. Homodimer. Zn(2+) serves as cofactor. It depends on Co(2+) as a cofactor.

The enzyme catalyses N-succinyl-(2S,6S)-2,6-diaminopimelate + H2O = (2S,6S)-2,6-diaminopimelate + succinate. The protein operates within amino-acid biosynthesis; L-lysine biosynthesis via DAP pathway; LL-2,6-diaminopimelate from (S)-tetrahydrodipicolinate (succinylase route): step 3/3. Catalyzes the hydrolysis of N-succinyl-L,L-diaminopimelic acid (SDAP), forming succinate and LL-2,6-diaminopimelate (DAP), an intermediate involved in the bacterial biosynthesis of lysine and meso-diaminopimelic acid, an essential component of bacterial cell walls. The protein is Succinyl-diaminopimelate desuccinylase of Blochmanniella pennsylvanica (strain BPEN).